The chain runs to 316 residues: Sorting nexin-20 (316 aa).

A disordered region spans residues 1–57; it reads MASHKHPGSPGWTGPICQDMAGTTPKASAPRPDLPRPGPEDHLEAQGSPSSNSSMTT. Ser3 carries the post-translational modification Phosphoserine. The span at 47-57 shows a compositional bias: polar residues; that stretch reads GSPSSNSSMTT. The region spanning 74–191 is the PX domain; the sequence is VKLLFEIASA…DFLTRPELKE (118 aa). Residues Arg116, Ser118, Lys143, and Arg157 each contribute to the a 1,2-diacyl-sn-glycero-3-phospho-(1D-myo-inositol-3-phosphate) site.

It belongs to the sorting nexin family. In terms of assembly, interacts with SELPLG. Interaction with SELPLG is controversial.

It localises to the early endosome membrane. It is found in the cell membrane. The protein resides in the cytoplasm. Its subcellular location is the nucleus. Functionally, may play a role in cellular vesicle trafficking. Has been proposed to function as a sorting protein that targets SELPLG into endosomes, but has no effect on SELPLG internalization from the cell surface, or on SELPLG-mediated cell-cell adhesion. The chain is Sorting nexin-20 (SNX20) from Bos taurus (Bovine).